Here is a 392-residue protein sequence, read N- to C-terminus: Putative cystathionine gamma-lyase 2 (392 aa).

Positions 32–55 (LSSTYKQDNPGEPKGHDYSRAGNP) are disordered. Residues 40–50 (NPGEPKGHDYS) show a composition bias toward basic and acidic residues. Substrate-binding residues include R51, Y103, and R108. K203 carries the post-translational modification N6-(pyridoxal phosphate)lysine. Position 330 (E330) interacts with substrate.

The protein belongs to the trans-sulfuration enzymes family. It depends on pyridoxal 5'-phosphate as a cofactor.

It is found in the cytoplasm. It catalyses the reaction L,L-cystathionine + H2O = 2-oxobutanoate + L-cysteine + NH4(+). Its pathway is amino-acid biosynthesis; L-cysteine biosynthesis; L-cysteine from L-homocysteine and L-serine: step 2/2. The chain is Putative cystathionine gamma-lyase 2 (cth-2) from Caenorhabditis elegans.